We begin with the raw amino-acid sequence, 129 residues long: Large ribosomal subunit protein bL17 (129 aa).

Belongs to the bacterial ribosomal protein bL17 family. As to quaternary structure, part of the 50S ribosomal subunit. Contacts protein L32.

This chain is Large ribosomal subunit protein bL17, found in Buchnera aphidicola subsp. Baizongia pistaciae (strain Bp).